A 148-amino-acid polypeptide reads, in one-letter code: Prefoldin subunit alpha (148 aa).

This sequence belongs to the prefoldin subunit alpha family. Heterohexamer of two alpha and four beta subunits.

The protein localises to the cytoplasm. Molecular chaperone capable of stabilizing a range of proteins. Seems to fulfill an ATP-independent, HSP70-like function in archaeal de novo protein folding. The chain is Prefoldin subunit alpha (pfdA) from Pyrococcus horikoshii (strain ATCC 700860 / DSM 12428 / JCM 9974 / NBRC 100139 / OT-3).